The following is a 195-amino-acid chain: 2-cysteine peroxiredoxin, chloroplastic (195 aa).

A Thioredoxin domain is found at 3–161 (IRVGQKAPDF…ALRTLQAIQY (159 aa)). Cysteine 49 acts as the Cysteine sulfenic acid (-SOH) intermediate in catalysis.

The protein belongs to the peroxiredoxin family. AhpC/Prx1 subfamily. Homodimer; disulfide-linked, upon oxidation.

It is found in the plastid. Its subcellular location is the chloroplast. It carries out the reaction a hydroperoxide + [thioredoxin]-dithiol = an alcohol + [thioredoxin]-disulfide + H2O. Thiol-specific peroxidase that catalyzes the reduction of hydrogen peroxide and organic hydroperoxides to water and alcohols, respectively. Plays a role in cell protection against oxidative stress by detoxifying peroxides. The protein is 2-cysteine peroxiredoxin, chloroplastic of Chattonella marina var. antiqua (Red tide flagellate).